Consider the following 232-residue polypeptide: Ribonuclease 3 (232 aa).

Positions 9–131 (INLLQKKLGY…IIGGIFLDSN (123 aa)) constitute an RNase III domain. Glutamate 44 contributes to the Mg(2+) binding site. Aspartate 48 is an active-site residue. Aspartate 117 and glutamate 120 together coordinate Mg(2+). Glutamate 120 is an active-site residue. The 71-residue stretch at 158–228 (DPKTRLQEYL…AENALKFLIE (71 aa)) folds into the DRBM domain.

It belongs to the ribonuclease III family. As to quaternary structure, homodimer. The cofactor is Mg(2+).

The protein resides in the cytoplasm. The enzyme catalyses Endonucleolytic cleavage to 5'-phosphomonoester.. In terms of biological role, digests double-stranded RNA. Involved in the processing of primary rRNA transcript to yield the immediate precursors to the large and small rRNAs (23S and 16S). Processes some mRNAs, and tRNAs when they are encoded in the rRNA operon. Processes pre-crRNA and tracrRNA of type II CRISPR loci if present in the organism. The protein is Ribonuclease 3 of Blochmanniella floridana.